The primary structure comprises 30 residues: Cyclotide cter-O (30 aa).

Positions 1 to 30 (GIPCGESCVFIPCITGIAGCSCKSKVCYRN) form a cross-link, cyclopeptide (Gly-Asn). Intrachain disulfides connect Cys4/Cys20, Cys8/Cys22, and Cys13/Cys27.

In terms of processing, this is a cyclic peptide.

The protein resides in the secreted. Its function is as follows. Probably participates in a plant defense mechanism. This Clitoria ternatea (Butterfly pea) protein is Cyclotide cter-O.